Here is a 120-residue protein sequence, read N- to C-terminus: Reprimo-like protein (120 aa).

The chain crosses the membrane as a helical span at residues 67–87 (VAQIAVLCVLSLTVVFGVFFL). Position 109 is a phosphoserine (Ser-109).

The protein belongs to the reprimo family.

The protein localises to the membrane. The chain is Reprimo-like protein (RPRML) from Homo sapiens (Human).